The primary structure comprises 397 residues: Argininosuccinate synthase (397 aa).

8–16 (AYSGGLDTS) lines the ATP pocket. Position 87 (Tyr87) interacts with L-citrulline. Residue Gly117 participates in ATP binding. Thr119, Asn123, and Asp124 together coordinate L-aspartate. L-citrulline is bound at residue Asn123. L-citrulline is bound by residues Arg127, Ser175, Glu259, and Tyr271.

The protein belongs to the argininosuccinate synthase family. Type 1 subfamily. As to quaternary structure, homotetramer.

Its subcellular location is the cytoplasm. It catalyses the reaction L-citrulline + L-aspartate + ATP = 2-(N(omega)-L-arginino)succinate + AMP + diphosphate + H(+). The protein operates within amino-acid biosynthesis; L-arginine biosynthesis; L-arginine from L-ornithine and carbamoyl phosphate: step 2/3. This Streptomyces clavuligerus protein is Argininosuccinate synthase.